Here is a 142-residue protein sequence, read N- to C-terminus: Protein Turandot X (142 aa).

An N-terminal signal peptide occupies residues 1–22 (MGLSIGSLLICVFLGIVPFATA).

This sequence belongs to the Turandot family.

Its subcellular location is the secreted. Functionally, a humoral factor that may play a role in stress tolerance. This Drosophila melanogaster (Fruit fly) protein is Protein Turandot X.